The primary structure comprises 255 residues: Acetyl-coenzyme A carboxylase carboxyl transferase subunit alpha (255 aa).

The CoA carboxyltransferase C-terminal domain maps to 1-235; the sequence is MNIAKIVREA…KKELQTELAR (235 aa).

The protein belongs to the AccA family. In terms of assembly, acetyl-CoA carboxylase is a heterohexamer composed of biotin carboxyl carrier protein (AccB), biotin carboxylase (AccC) and two subunits each of ACCase subunit alpha (AccA) and ACCase subunit beta (AccD).

The protein localises to the cytoplasm. The catalysed reaction is N(6)-carboxybiotinyl-L-lysyl-[protein] + acetyl-CoA = N(6)-biotinyl-L-lysyl-[protein] + malonyl-CoA. It participates in lipid metabolism; malonyl-CoA biosynthesis; malonyl-CoA from acetyl-CoA: step 1/1. Functionally, component of the acetyl coenzyme A carboxylase (ACC) complex. First, biotin carboxylase catalyzes the carboxylation of biotin on its carrier protein (BCCP) and then the CO(2) group is transferred by the carboxyltransferase to acetyl-CoA to form malonyl-CoA. In Streptococcus pneumoniae serotype 19F (strain G54), this protein is Acetyl-coenzyme A carboxylase carboxyl transferase subunit alpha.